A 539-amino-acid polypeptide reads, in one-letter code: DNA damage-binding protein CMR1 (539 aa).

The tract at residues 22-89 (LNLPTEAKKE…ALKQEDLGGS (68 aa)) is disordered. A compositionally biased stretch (basic and acidic residues) spans 27–39 (EAKKESVDPEVAP). 6 WD repeats span residues 182 to 223 (VTKE…EPLQ), 226 to 268 (LHHA…DVLD), 316 to 356 (LGEK…TART), 377 to 415 (NSRL…LDML), 462 to 505 (GRWV…LAHL), and 508 to 539 (ALMT…YWWE).

It belongs to the WD repeat DDB2/WDR76 family.

Functionally, DNA-binding protein that binds to both single- and double-stranded DNA. Binds preferentially to UV-damaged DNA. May be involved in DNA-metabolic processes. The polypeptide is DNA damage-binding protein CMR1 (Yarrowia lipolytica (strain CLIB 122 / E 150) (Yeast)).